We begin with the raw amino-acid sequence, 224 residues long: Oxaloacetate tautomerase FAHD2, mitochondrial (224 aa).

Residues 1–30 (MATSMIQRLFKQGTKIVGVGLNYASHAKEL) constitute a mitochondrion transit peptide. Positions 67, 69, and 98 each coordinate Mg(2+).

Belongs to the FAH family. Requires Mg(2+) as cofactor. Mn(2+) is required as a cofactor.

It is found in the mitochondrion. The catalysed reaction is oxaloacetate = enol-oxaloacetate. Functionally, tautomerase that converts enol-oxaloacetate, a strong inhibitor of succinate dehydrogenase, to the physiological keto form of oxaloacetate. This chain is Oxaloacetate tautomerase FAHD2, mitochondrial, found in Arabidopsis thaliana (Mouse-ear cress).